The sequence spans 428 residues: Adenylosuccinate synthetase (428 aa).

GTP-binding positions include 11 to 17 and 39 to 41; these read GDEGKGK and GHT. The active-site Proton acceptor is Asp-12. The Mg(2+) site is built by Asp-12 and Gly-39. IMP-binding positions include 12–15, 37–40, Thr-130, Arg-144, Asn-226, Thr-241, and Arg-305; these read DEGK and NAGH. The active-site Proton donor is His-40. 301–307 is a substrate binding site; that stretch reads VTTGRKR. GTP contacts are provided by residues Arg-307, 333–335, and 415–417; these read KLD and GTG.

Belongs to the adenylosuccinate synthetase family. In terms of assembly, homodimer. It depends on Mg(2+) as a cofactor.

The protein resides in the cytoplasm. It catalyses the reaction IMP + L-aspartate + GTP = N(6)-(1,2-dicarboxyethyl)-AMP + GDP + phosphate + 2 H(+). It participates in purine metabolism; AMP biosynthesis via de novo pathway; AMP from IMP: step 1/2. Functionally, plays an important role in the de novo pathway and in the salvage pathway of purine nucleotide biosynthesis. Catalyzes the first committed step in the biosynthesis of AMP from IMP. In Komagataella phaffii (strain GS115 / ATCC 20864) (Yeast), this protein is Adenylosuccinate synthetase.